The sequence spans 349 residues: Alanine racemase (349 aa).

Lys-35 (proton acceptor; specific for D-alanine) is an active-site residue. Lys-35 bears the N6-(pyridoxal phosphate)lysine mark. Arg-130 is a binding site for substrate. The Proton acceptor; specific for L-alanine role is filled by Tyr-244. Met-292 is a binding site for substrate.

The protein belongs to the alanine racemase family. It depends on pyridoxal 5'-phosphate as a cofactor.

The catalysed reaction is L-alanine = D-alanine. The protein operates within amino-acid biosynthesis; D-alanine biosynthesis; D-alanine from L-alanine: step 1/1. Its function is as follows. Catalyzes the interconversion of L-alanine and D-alanine. May also act on other amino acids. The sequence is that of Alanine racemase (alr) from Cereibacter sphaeroides (strain ATCC 17023 / DSM 158 / JCM 6121 / CCUG 31486 / LMG 2827 / NBRC 12203 / NCIMB 8253 / ATH 2.4.1.) (Rhodobacter sphaeroides).